Reading from the N-terminus, the 190-residue chain is CASP-like protein 5A3 (190 aa).

Composition is skewed to low complexity over residues 1–12 (MRASRPAVHPVE) and 20–31 (AAAEGPEAQVEG). Positions 1–31 (MRASRPAVHPVEAAPPPPAAAAEGPEAQVEG) are disordered. The Cytoplasmic portion of the chain corresponds to 1 to 50 (MRASRPAVHPVEAAPPPPAAAAEGPEAQVEGAAHPRGVRMKDPPGAPGTP). A helical transmembrane segment spans residues 51–71 (AGLGLRLAQAFFAAAALAVMA). Over 72-81 (STNDFPSVSA) the chain is Extracellular. A helical transmembrane segment spans residues 82–102 (FSYLVAAAILQCLWSLLLAFV). Topologically, residues 103–126 (DIYALLVKRSLRNARAVCIFTIGD) are cytoplasmic. Residues 127–147 (GITGTITLGAACASAGITVLI) form a helical membrane-spanning segment. At 148–164 (GNDLNICAENHCASFET) the chain is on the extracellular side. Residues 165-185 (ATALAFISWFALAPSCILNFW) form a helical membrane-spanning segment. The Cytoplasmic portion of the chain corresponds to 186–190 (SMASR).

This sequence belongs to the Casparian strip membrane proteins (CASP) family. Homodimer and heterodimers.

The protein resides in the cell membrane. This chain is CASP-like protein 5A3, found in Zea mays (Maize).